Reading from the N-terminus, the 351-residue chain is UDP-3-O-acylglucosamine N-acyltransferase (351 aa).

Histidine 257 serves as the catalytic Proton acceptor.

The protein belongs to the transferase hexapeptide repeat family. LpxD subfamily. In terms of assembly, homotrimer.

The catalysed reaction is a UDP-3-O-[(3R)-3-hydroxyacyl]-alpha-D-glucosamine + a (3R)-hydroxyacyl-[ACP] = a UDP-2-N,3-O-bis[(3R)-3-hydroxyacyl]-alpha-D-glucosamine + holo-[ACP] + H(+). It functions in the pathway bacterial outer membrane biogenesis; LPS lipid A biosynthesis. Its function is as follows. Catalyzes the N-acylation of UDP-3-O-acylglucosamine using 3-hydroxyacyl-ACP as the acyl donor. Is involved in the biosynthesis of lipid A, a phosphorylated glycolipid that anchors the lipopolysaccharide to the outer membrane of the cell. The protein is UDP-3-O-acylglucosamine N-acyltransferase of Brucella abortus (strain S19).